A 436-amino-acid chain; its full sequence is Voltage-gated purine nucleotide uniporter SLC17A9 (436 aa).

A run of 10 helical transmembrane segments spans residues 64–84 (IVLS…GHLG), 92–112 (VILL…LLAH), 118–138 (LAFM…YFPA), 158–178 (IVGA…SLLL), 181–201 (YGWQ…VWYV), 239–259 (PAVW…FILL), 276–296 (WIFN…SGFL), 316–336 (GMGL…SSFC), 369–389 (GFLF…GVCL), and 402–422 (CLFN…LVFG).

Belongs to the major facilitator superfamily. Sodium/anion cotransporter family. As to expression, widely expressed, but more predominantly in adrenal gland, brain and thyroid.

It localises to the cytoplasmic vesicle. It is found in the secretory vesicle. The protein resides in the chromaffin granule membrane. Its subcellular location is the secretory vesicle membrane. The protein localises to the lysosome membrane. It carries out the reaction ATP(in) = ATP(out). The enzyme catalyses ADP(in) = ADP(out). The catalysed reaction is GTP(in) = GTP(out). Activity is chloride-dependent. Inhibited by AMP-PNP, gammaS-ATP, diadenosine triphosphate, 4,4'- diisothiocyanatostilbene-2,2'-disulfonate (DIDS) and Evans blue. In terms of biological role, voltage-gated ATP nucleotide uniporter that can also transport the purine nucleotides ADP and GTP. Uses the membrane potential as the driving force to control ATP accumulation in lysosomes and secretory vesicles. By controlling ATP storage in lysosomes, regulates ATP-dependent proteins of these organelles. Also indirectly regulates the exocytosis of ATP through its import into lysosomes in astrocytes and secretory vesicles such as adrenal chromaffin granules, mucin granules and synaptic vesicles. The polypeptide is Voltage-gated purine nucleotide uniporter SLC17A9 (Homo sapiens (Human)).